The primary structure comprises 107 residues: Protein Rev (107 aa).

A Phosphoserine; by host CK2 modification is found at Ser5. The segment at Ala18–Asn26 is homomultimerization. Disordered stretches follow at residues Gln24–Arg48 and His82–Ser107. Positions Thr34–Arg50 match the Nuclear localization signal and RNA-binding (RRE) motif. Over residues Gln36 to Arg48 the composition is skewed to basic residues. Residues Leu73–Asp84 carry the Nuclear export signal and binding to XPO1 motif. Polar residues predominate over residues Asp88–Glu101. A Phosphoserine; by host modification is found at Ser92.

It belongs to the HIV-1 REV protein family. Homomultimer; when bound to the RRE. Multimeric assembly is essential for activity and may involve XPO1. Binds to human KPNB1, XPO1, TNPO1, RANBP5 and IPO7. Interacts with the viral Integrase. Interacts with human KHDRBS1. Interacts with human NAP1; this interaction decreases Rev multimerization and stimulates its activity. Interacts with human DEAD-box helicases DDX3 and DDX24; these interactions may serve for viral RNA export to the cytoplasm and packaging, respectively. Interacts with human PSIP1; this interaction may inhibit HIV-1 DNA integration by promoting dissociation of the Integrase-LEDGF/p75 complex. Asymmetrically arginine dimethylated at one site by host PRMT6. Methylation impairs the RNA-binding activity and export of viral RNA from the nucleus to the cytoplasm. Post-translationally, phosphorylated by protein kinase CK2. Presence of, and maybe binding to the N-terminus of the regulatory beta subunit of CK2 is necessary for CK2-mediated Rev's phosphorylation.

Its subcellular location is the host nucleus. It is found in the host nucleolus. It localises to the host cytoplasm. In terms of biological role, escorts unspliced or incompletely spliced viral pre-mRNAs (late transcripts) out of the nucleus of infected cells. These pre-mRNAs carry a recognition sequence called Rev responsive element (RRE) located in the env gene, that is not present in fully spliced viral mRNAs (early transcripts). This function is essential since most viral proteins are translated from unspliced or partially spliced pre-mRNAs which cannot exit the nucleus by the pathway used by fully processed cellular mRNAs. Rev itself is translated from a fully spliced mRNA that readily exits the nucleus. Rev's nuclear localization signal (NLS) binds directly to KPNB1/Importin beta-1 without previous binding to KPNA1/Importin alpha-1. KPNB1 binds to the GDP bound form of RAN (Ran-GDP) and targets Rev to the nucleus. In the nucleus, the conversion from Ran-GDP to Ran-GTP dissociates Rev from KPNB1 and allows Rev's binding to the RRE in viral pre-mRNAs. Rev multimerization on the RRE via cooperative assembly exposes its nuclear export signal (NES) to the surface. Rev can then form a complex with XPO1/CRM1 and Ran-GTP, leading to nuclear export of the complex. Conversion from Ran-GTP to Ran-GDP mediates dissociation of the Rev/RRE/XPO1/RAN complex, so that Rev can return to the nucleus for a subsequent round of export. Beside KPNB1, also seems to interact with TNPO1/Transportin-1, RANBP5/IPO5 and IPO7/RANBP7 for nuclear import. The nucleoporin-like HRB/RIP is an essential cofactor that probably indirectly interacts with Rev to release HIV RNAs from the perinuclear region to the cytoplasm. This Human immunodeficiency virus type 1 group M subtype G (isolate SE6165) (HIV-1) protein is Protein Rev.